The chain runs to 1117 residues: DNA polymerase (1117 aa).

Residues 591-621 (ESSPVASFEEDSEQTSDSSLGEVSSQGSSDG) form a disordered region. A compositionally biased stretch (low complexity) spans 606 to 618 (SDSSLGEVSSQGS).

The protein belongs to the DNA polymerase type-B family.

It is found in the host nucleus. The catalysed reaction is DNA(n) + a 2'-deoxyribonucleoside 5'-triphosphate = DNA(n+1) + diphosphate. This Cavia porcellus (Guinea pig) protein is DNA polymerase.